Reading from the N-terminus, the 567-residue chain is uncharacterized protein (567 aa).

Residues 1 to 31 are Lumenal-facing; that stretch reads MLDTILINVFRRDGDDDDDDGQDPALQELYS. Residues 32 to 52 traverse the membrane as a helical segment; that stretch reads SWALFILLVLLIGALLTSYYV. Residues 53-64 are Cytoplasmic-facing; it reads QSKKIRAIHETV. A helical membrane pass occupies residues 65-85; that stretch reads ISVFVGMVVGLIIRVSPGLII. The Lumenal segment spans residues 86–87; it reads QN. The chain crosses the membrane as a helical span at residues 88–108; that stretch reads MVSFHSTYFFNVLLPPIILNS. Residues 109-128 are Cytoplasmic-facing; the sequence is GYELHQSNFFRNIGTILTFA. Residues 129–149 traverse the membrane as a helical segment; the sequence is FAGTFISAVTLGVLVYIFSFL. Over 150–159 the chain is Lumenal; the sequence is NFENLSMTFV. Residues 160–180 traverse the membrane as a helical segment; that stretch reads EALSMGATLSATDPVTVLAIF. Topologically, residues 181-188 are cytoplasmic; it reads NSYKVDQK. A helical membrane pass occupies residues 189–209; that stretch reads LYTIIFGESILNDAVAIVMFE. Over 210-227 the chain is Lumenal; sequence TLQQFQGKTLHFFTLFSG. Residues 228-248 form a helical membrane-spanning segment; sequence IGIFIITFFISLLIGVSIGLI. Residues 249-277 lie on the Cytoplasmic side of the membrane; the sequence is TALLLKYSYLRRYPSIESCIILLMAYTSY. The helical transmembrane segment at 278 to 298 threads the bilayer; the sequence is FFSNGCHMSGVVSLLFCGITL. Residues 299–315 are Lumenal-facing; sequence KHYAFFNMSYKAKLSTK. A helical transmembrane segment spans residues 316–338; it reads YVFRVLAQLSENFIFIYLGMSLF. Topologically, residues 339 to 347 are cytoplasmic; that stretch reads TQVDLVYKP. A helical membrane pass occupies residues 348 to 366; that stretch reads IFILITTVAVTASRYMNVF. Residues 367–392 are Lumenal-facing; sequence PLSNLLNKFHRQRNGNLIDHIPYSYQ. A helical membrane pass occupies residues 393 to 413; the sequence is MMLFWAGLRGAVGVALAAGFE. Residues 414–424 are Cytoplasmic-facing; the sequence is GENAQTLRATT. Residues 425-445 traverse the membrane as a helical segment; that stretch reads LVVVVLTLIIFGGTTARMLEI. The Lumenal segment spans residues 446–567; the sequence is LHIETGVAAD…RDNLKNGTKK (122 aa). Ser515 is modified (phosphoserine).

The protein belongs to the monovalent cation:proton antiporter 1 (CPA1) transporter (TC 2.A.36) family.

It is found in the golgi apparatus membrane. This is an uncharacterized protein from Schizosaccharomyces pombe (strain 972 / ATCC 24843) (Fission yeast).